The primary structure comprises 334 residues: Glyceraldehyde-3-phosphate dehydrogenase 1 (334 aa).

NAD(+) contacts are provided by residues 12-13 (RI), aspartate 35, and arginine 79. D-glyceraldehyde 3-phosphate contacts are provided by residues 152–154 (SCT), threonine 183, arginine 198, 211–212 (SG), and arginine 234. Cysteine 153 (nucleophile) is an active-site residue. Position 315 (asparagine 315) interacts with NAD(+).

Belongs to the glyceraldehyde-3-phosphate dehydrogenase family. Homotetramer.

Its subcellular location is the cytoplasm. It catalyses the reaction D-glyceraldehyde 3-phosphate + phosphate + NAD(+) = (2R)-3-phospho-glyceroyl phosphate + NADH + H(+). Its pathway is carbohydrate degradation; glycolysis; pyruvate from D-glyceraldehyde 3-phosphate: step 1/5. With respect to regulation, resistant to pentalenolactone. Catalyzes the oxidative phosphorylation of glyceraldehyde 3-phosphate (G3P) to 1,3-bisphosphoglycerate (BPG) using the cofactor NAD. The first reaction step involves the formation of a hemiacetal intermediate between G3P and a cysteine residue, and this hemiacetal intermediate is then oxidized to a thioester, with concomitant reduction of NAD to NADH. The reduced NADH is then exchanged with the second NAD, and the thioester is attacked by a nucleophilic inorganic phosphate to produce BPG. The polypeptide is Glyceraldehyde-3-phosphate dehydrogenase 1 (gap1) (Streptomyces avermitilis (strain ATCC 31267 / DSM 46492 / JCM 5070 / NBRC 14893 / NCIMB 12804 / NRRL 8165 / MA-4680)).